The sequence spans 393 residues: MTRVVLAAAYRTPIGVFGGAFKDVPAYDLGATLIEHIIKETGLNPSEIDEVIIGNVLQAGQGQNPARIAAMKGGLPETVPAFTVNKVCGSGLKSIQLAYQSIVTGENDIVLAGGMENMSQSPMLVNNSRFGFKMGHQSMVDSMVYDGLTDVFNQYHMGITAENLVEQYGISREEQDTFAVNSQHKAVRAQQNGEFDSEIVPVSIPQRKGEPILVTKDEGVRENVSVEKLSRLRPAFKKDGTVTAGNASGINDGAAMMLVMSEDKAKELNIEPLAVLDGFGSHGVDPSIMGIAPVGAVEKALKRSKKELSDIDVFELNEAFAAQLLAVDRELKLPPEKVNVKGGAIALGHPIGASGARVLVTLLHQLNDEVETGLTSLCIGGGQAIAAVVSKYK.

The active-site Acyl-thioester intermediate is the cysteine 88. Residues histidine 349 and cysteine 378 each act as proton acceptor in the active site.

This sequence belongs to the thiolase-like superfamily. Thiolase family.

It is found in the cytoplasm. The catalysed reaction is 2 acetyl-CoA = acetoacetyl-CoA + CoA. This is Probable acetyl-CoA acyltransferase from Staphylococcus aureus (strain Mu50 / ATCC 700699).